A 569-amino-acid polypeptide reads, in one-letter code: uncharacterized protein (569 aa).

A signal peptide spans Met1–Ala21. Topologically, residues Lys22 to Lys530 are extracellular. Residues Ala531–Phe551 form a helical membrane-spanning segment. Over Tyr552–Gly569 the chain is Cytoplasmic.

The protein localises to the cell membrane. This is an uncharacterized protein from Bacillus subtilis (strain 168).